The sequence spans 326 residues: D-allose transport system permease protein AlsC (326 aa).

The Cytoplasmic segment spans residues 1 to 18; sequence MGFTTRVKSEASEKKPFN. The chain crosses the membrane as a helical span at residues 19–39; that stretch reads FALFWDKYGTFFILAIIVAIF. Residues 40 to 70 are Periplasmic-facing; the sequence is GSLSPEYFLTTNNITQIFVQSSVTVLIGMGE. A helical transmembrane segment spans residues 71 to 91; that stretch reads FFAILVAGIDLSVGAILALSG. Over 92 to 101 the chain is Cytoplasmic; sequence MVTAKLMLAG. A helical membrane pass occupies residues 102 to 122; the sequence is VDPFLAAMIGGVLVGGALGAI. At 123–124 the chain is on the periplasmic side; it reads NG. The helical transmembrane segment at 125 to 145 threads the bilayer; that stretch reads CLVNWTGLHPFIITLGTNAIF. The Cytoplasmic segment spans residues 146 to 149; the sequence is RGIT. A helical membrane pass occupies residues 150 to 170; sequence LVISDANSVYGFSFDFVNFFA. Over 171 to 172 the chain is Periplasmic; sequence AS. The helical transmembrane segment at 173–193 threads the bilayer; sequence VIGIPVPVIFSLIVALILWFL. At 194-221 the chain is on the cytoplasmic side; it reads TTRMRLGRNIYALGGNKNSAFYSGIDVK. A helical transmembrane segment spans residues 222–242; that stretch reads FHILVVFIISGVCAGLAGVVS. At 243–252 the chain is on the periplasmic side; the sequence is TARLGAAEPL. Residues 253–273 traverse the membrane as a helical segment; sequence AGMGFETYAIASAIIGGTSFF. Topologically, residues 274–278 are cytoplasmic; the sequence is GGKGR. A run of 2 helical transmembrane segments spans residues 279–299 and 300–320; these read IFSV…LNIL and QVQT…AVAL. Topologically, residues 321–326 are cytoplasmic; that stretch reads DRLISK.

It belongs to the binding-protein-dependent transport system permease family. AraH/RbsC subfamily.

It is found in the cell inner membrane. In terms of biological role, part of the binding-protein-dependent transport system AlsBAC for D-allose; probably responsible for the translocation of the substrate across the membrane. The chain is D-allose transport system permease protein AlsC (alsC) from Escherichia coli (strain K12).